The sequence spans 312 residues: MENFKHTTVLLDEAVNGLNIRPDGIYIDGTFGRGGHSRLILSQLGEEGRLLAIDRDPQAIAVAQTINDPRFSIIHGPFSALADYVAEREFTGKIDGILLDLGVSSPQLDDAERGFSFMRDGPLDMRMDPTRGQSAAEWLQTAEEADIAWVLKTFGEERFAKRIARAIVERNREQPMTRTKELAEVVAAATPVKDKFKHPATRTFQAVRIWVNSELEEIEQALKSSLSVLAPGGRLSIISFHSLEDRIVKRFMREQSRGPQVPAGLPMTEAQRKKLGGRELRALGKLMPGEKEVAENPRARSSVLRIAERTNA.

S-adenosyl-L-methionine-binding positions include 34–36 (GGH), Asp54, Phe78, Asp100, and Gln107.

It belongs to the methyltransferase superfamily. RsmH family.

The protein resides in the cytoplasm. It catalyses the reaction cytidine(1402) in 16S rRNA + S-adenosyl-L-methionine = N(4)-methylcytidine(1402) in 16S rRNA + S-adenosyl-L-homocysteine + H(+). Specifically methylates the N4 position of cytidine in position 1402 (C1402) of 16S rRNA. The polypeptide is Ribosomal RNA small subunit methyltransferase H (Salmonella choleraesuis (strain SC-B67)).